A 522-amino-acid polypeptide reads, in one-letter code: GMP synthase [glutamine-hydrolyzing] (522 aa).

Positions 9–204 (KILILDFGAQ…VVDICGCQML (196 aa)) constitute a Glutamine amidotransferase type-1 domain. The active-site Nucleophile is Cys86. Residues His178 and Glu180 contribute to the active site. The region spanning 205-397 (WTAANIIEDQ…LGLPHAMVYR (193 aa)) is the GMPS ATP-PPase domain. 232–238 (SGGVDSS) is a binding site for ATP.

As to quaternary structure, homodimer.

It carries out the reaction XMP + L-glutamine + ATP + H2O = GMP + L-glutamate + AMP + diphosphate + 2 H(+). The protein operates within purine metabolism; GMP biosynthesis; GMP from XMP (L-Gln route): step 1/1. Its function is as follows. Catalyzes the synthesis of GMP from XMP. In Xylella fastidiosa (strain 9a5c), this protein is GMP synthase [glutamine-hydrolyzing] (guaA).